A 655-amino-acid polypeptide reads, in one-letter code: UvrABC system protein C (655 aa).

The GIY-YIG domain occupies 16 to 95 (TDPGVYRFRD…IKEFAPRYNL (80 aa)). The UVR domain maps to 207-242 (KRFIGTLEKQMAEAVAELDYERAARLRDDVIALRKV).

It belongs to the UvrC family. In terms of assembly, interacts with UvrB in an incision complex.

It is found in the cytoplasm. In terms of biological role, the UvrABC repair system catalyzes the recognition and processing of DNA lesions. UvrC both incises the 5' and 3' sides of the lesion. The N-terminal half is responsible for the 3' incision and the C-terminal half is responsible for the 5' incision. This is UvrABC system protein C from Renibacterium salmoninarum (strain ATCC 33209 / DSM 20767 / JCM 11484 / NBRC 15589 / NCIMB 2235).